Consider the following 1706-residue polypeptide: Serine/threonine-protein kinase vps15 (1706 aa).

Residues 24–293 (YHNERSLGDS…YLQKYRGTVF (270 aa)) form the Protein kinase domain. ATP-binding positions include 30 to 38 (LGDSHFLRT) and lysine 52. The stretch at 56-94 (NKLPEISLSSIVNLLKEEQENISYRVPNAVPYIKTLVTL) is one HEAT 1 repeat. Aspartate 146 acts as the Proton acceptor in catalysis. HEAT repeat units follow at residues 426-465 (LYGAAVLLPIVLSTIRHVNTRESKINALSLVQILSRNICD), 466-504 (ESKLDTVLPFVMTLLRDQYADVRISALITITRLVSNVTS), 511-549 (FLFQEYLFPDLQHFLFDMNSRTRATYASCLPILAKQASK), 587-625 (HDLVVTVERHVSTLLADSSSIVRRSLLNALAPLCVFFGK), 626-664 (AKSNDLILSHLITYLNDTDWMLRCAFFESITGLSIFIGP), 665-703 (RSVDEYILPLMLQALVDPEPAVLESVLGSFSGLIELHLF), and 705-743 (KLVVVDILQLVLPLVAVPNAYIRRAALSVIYSAYQSFDD). Serine 957 bears the Phosphoserine mark. Tyrosine 958 bears the Phosphotyrosine mark. Positions 982-1099 (TTKPKDVSQS…GKSLAPLISS (118 aa)) are disordered. Basic and acidic residues-rich tracts occupy residues 984–1002 (KPKDVSQSDIKVDINRESN) and 1014–1023 (DVYRQTDNPE). Residues 1029-1055 (DTASSKVDTHNPTVTQPTDDTGGLNSY) show a composition bias toward polar residues. Residues 1056–1069 (NTENPLLTNNTLEP) are compositionally biased toward low complexity. The segment covering 1079 to 1090 (KDSDKHAKESKG) has biased composition (basic and acidic residues). WD repeat units lie at residues 1213–1252 (LLDGGTKKVLVSPDSSFFVTLGSDGVVRAWQLVESVRHIS) and 1368–1407 (LQCGSATSVVVSEGCNWALIGTTKGWLLLWDLRFGTLSCS). A compositionally biased stretch (polar residues) spans 1431–1442 (NEYTSGNNNSPV). Residues 1431–1461 (NEYTSGNNNSPVTKVPGSSSTSSSSTQPINS) form a disordered region. The stretch at 1577-1622 (CISSPIYRYRGPSAGSVEREPLFLIAASGSPHAFIWNPHNVSASSS) is one WD 3 repeat.

This sequence belongs to the protein kinase superfamily. Ser/Thr protein kinase family. In terms of assembly, component of the autophagy-specific vps34 PI3-kinase complex I composed of vps15, atg6, pik3/vps34, atg14 and atg38. Also a component of the vps34 PI3-kinase complex II composed of atg6, pik3, vps15 and vps38.

It carries out the reaction L-seryl-[protein] + ATP = O-phospho-L-seryl-[protein] + ADP + H(+). The enzyme catalyses L-threonyl-[protein] + ATP = O-phospho-L-threonyl-[protein] + ADP + H(+). Functionally, functions as a part of the autophagy-specific VPS34 PI3-kinase complex I that plays a role in autophagosome assembly. This complex is essential to recruit the atg8-phosphatidylinositol conjugate and the atg12-atg5 conjugate to the pre-autophagosomal structure. Also functions as part of the VPS34 PI3-kinase complex II. The sequence is that of Serine/threonine-protein kinase vps15 from Schizosaccharomyces pombe (strain 972 / ATCC 24843) (Fission yeast).